Reading from the N-terminus, the 1147-residue chain is uncharacterized protein (1147 aa).

Disordered stretches follow at residues 226–245 (FGQG…GQVD), 255–297 (IQGT…QEKA), 431–617 (SQHP…QSCI), 647–670 (EEMD…DPVR), 705–945 (HRHR…RRLQ), 1003–1032 (RQQQ…EAEK), and 1060–1090 (YQRR…RLAQ). Residues 268-296 (WQKDETQTEDTSKDNHHCIHTSKENHQEK) are compositionally biased toward basic and acidic residues. A compositionally biased stretch (basic residues) spans 431–441 (SQHPPKGKAQR). Over residues 538 to 549 (PAGGALPAAGQA) the composition is skewed to low complexity. Positions 584-603 (LNETSPLTQKPENQGAQQSL) are enriched in polar residues. Positions 743 to 752 (NQKTSNNISN) are enriched in polar residues. Residues 743 to 804 (NQKTSNNISN…ESKAEKKSQL (62 aa)) adopt a coiled-coil conformation. Over residues 768–802 (TDKSKAPKREKEGKLHEEAEAAVGKSKESKAEKKS) the composition is skewed to basic and acidic residues. A compositionally biased stretch (basic residues) spans 807 to 819 (KGKKTGAKGKRTR). Residues 870-884 (SQVSIDGRSSPTQTA) are compositionally biased toward polar residues. Residues 895-945 (DRSHEDPSKAFLVKREQEKASRDRLRAERAEMRRLEVERKRREQEEQRRLQ) show a composition bias toward basic and acidic residues. Positions 907 to 1112 (VKREQEKASR…QKDALKKHLH (206 aa)) form a coiled coil.

This is an uncharacterized protein from Bos taurus (Bovine).